A 400-amino-acid chain; its full sequence is Elongation factor Tu-B (400 aa).

In terms of domain architecture, tr-type G spans 10–209 (KPHVNVGTIG…VVDEYIPTPE (200 aa)). The tract at residues 19 to 26 (GHVDHGKT) is G1. A GTP-binding site is contributed by 19–26 (GHVDHGKT). Threonine 26 provides a ligand contact to Mg(2+). The interval 60–64 (GITIN) is G2. Positions 81-84 (DCPG) are G3. GTP is bound by residues 81 to 85 (DCPGH) and 136 to 139 (NKAD). The G4 stretch occupies residues 136 to 139 (NKAD). Residues 174-176 (SAL) form a G5 region.

Belongs to the TRAFAC class translation factor GTPase superfamily. Classic translation factor GTPase family. EF-Tu/EF-1A subfamily. Monomer.

It localises to the cytoplasm. The catalysed reaction is GTP + H2O = GDP + phosphate + H(+). Its function is as follows. GTP hydrolase that promotes the GTP-dependent binding of aminoacyl-tRNA to the A-site of ribosomes during protein biosynthesis. The polypeptide is Elongation factor Tu-B (Caldanaerobacter subterraneus subsp. tengcongensis (strain DSM 15242 / JCM 11007 / NBRC 100824 / MB4) (Thermoanaerobacter tengcongensis)).